Consider the following 1429-residue polypeptide: Inactive rhomboid protein 1 (1429 aa).

Disordered stretches follow at residues 1-36 (MSSN…STRR), 560-579 (GNED…PDRP), and 740-766 (TSAL…QPGA). Residues 1-843 (MSSNGSDLGH…RPFFTYWINT (843 aa)) lie on the Cytoplasmic side of the membrane. Low complexity predominate over residues 22–33 (SVHSSMRGSMSS). Polar residues-rich tracts occupy residues 564-573 (AGQSNGTNGN) and 740-763 (TSAL…SSHQ). Residues 844–864 (VQVVVLILSIICYGIAPIGIG) form a helical membrane-spanning segment. The Lumenal portion of the chain corresponds to 865 to 1099 (SEQKTGQVLV…PDQLYRLLTS (235 aa)). The helical transmembrane segment at 1100–1120 (LCMHAGILHLAITLIFQHLFL) threads the bilayer. Residues 1121 to 1131 (ADLERLIGTVR) are Cytoplasmic-facing. The chain crosses the membrane as a helical span at residues 1132–1152 (TAIVYIMSGFAGNLTSAILVP). Topologically, residues 1153 to 1156 (HRPE) are lumenal. Residues 1157-1177 (VGPSASLSGVVASLIALLVWM) form a helical membrane-spanning segment. Topologically, residues 1178 to 1186 (HWKYLHKPH) are cytoplasmic. A helical membrane pass occupies residues 1187–1207 (IALFKLLLLCSVLVGIGTLPY). Topologically, residues 1208–1210 (QLN) are lumenal. A helical transmembrane segment spans residues 1211–1231 (FLGLLAGVICGCLLTMSLVPF). Topologically, residues 1232–1245 (TTFSKYGRKKKINL) are cytoplasmic. The chain crosses the membrane as a helical span at residues 1246 to 1266 (IWTCVLFHVVVYTAMIVTFYI). At 1267-1429 (HPSEFHSISF…INNNTEFNVL (163 aa)) the chain is on the lumenal side.

It belongs to the peptidase S54 family. As to expression, specifically expressed in the nervous system and in brain.

It localises to the endoplasmic reticulum membrane. Its function is as follows. Rhomboid protease-like protein which has no protease activity but regulates the secretion of several ligands of the epidermal growth factor receptor. Indirectly activates the epidermal growth factor receptor signaling pathway and may thereby regulate sleep, cell survival, proliferation and migration. This chain is Inactive rhomboid protein 1 (rho-5), found in Drosophila melanogaster (Fruit fly).